The sequence spans 984 residues: MORC family CW-type zinc finger protein 1 (984 aa).

Residues 284-353 (AFKDEVKKAE…RELKTARTLS (70 aa)) adopt a coiled-coil conformation. The segment at 477-531 (AMGIPFIIQCDLCLKWRVLPSSTNYQEKEFFDIWICANNPNRLENSCHQVECLPS) adopts a CW-type zinc-finger fold. The Zn(2+) site is built by C486, C489, C512, and C523. Coiled coils occupy residues 737 to 761 (DVSL…CNDV) and 900 to 934 (EISL…LQLG).

It localises to the nucleus. Required for spermatogenesis. Essential for de novo DNA methylation and silencing of transposable elements in the male embryonic germ cells. The polypeptide is MORC family CW-type zinc finger protein 1 (Homo sapiens (Human)).